Here is a 218-residue protein sequence, read N- to C-terminus: Flagellar calcium-binding protein TB-24 (218 aa).

Positions 1–27 (MGCSASKDTTNSKDGAASKGGKDGKTT) are disordered. EF-hand domains lie at 48–83 (ESKS…ILKL), 84–119 (DEFT…LVEF), 130–165 (YDIF…LKEW), and 167–202 (VDIT…KKLQ). The Ca(2+) site is built by aspartate 61, asparagine 63, threonine 65, lysine 67, and glutamate 72. Aspartate 143, aspartate 145, serine 147, glutamate 154, aspartate 180, asparagine 182, serine 184, and glutamate 191 together coordinate Ca(2+).

It belongs to the calflagin family.

Its subcellular location is the cell projection. The protein resides in the cilium. The protein localises to the flagellum. In terms of biological role, may contribute to the rapid motility of the trypanosomes, playing a role either in flagellar structure or in calcium metabolism. Could alternate between a GDP-bound inactive form to a calcium/GTP-bound active form. The polypeptide is Flagellar calcium-binding protein TB-24 (Trypanosoma brucei brucei).